A 775-amino-acid chain; its full sequence is MEVLVQLALLLVVHGSLVVLVAGKSVPRVIDQDLERYEPLEEEDHRGARVPFNLEETYDQSFRANSFNGTWKTDREILYSDNYVGDIRLFDVTTGSGTVLLDSSVTADFDKASVMFSFDNSHVAIGHDYVNGFRYSIHQKCTVYNIKSRTFTDIANGDRIPLFKWSPTRNALIYVHKNDIYYQVFFEGGSDTRRITNTGVPDIVFNGIPDWVYEEEVLGSPVAFWISPDGRHLAFATFNDTNVRDIVISKYGSPGNSRDQYPNEIRIKYPKAGTTNPFVSLSVIDLHDPSSKLIDLPPPVDVVGADNVLYTANWRRDGEIVATWTNRVQNKAQLVLYDTKGNANNIYYEEETEGWLRIQPPLYHDRYVIVAKLQDSGTKAGRFLHATRLEYRNGALVDETDLTPGTCEVISLLLVDHARARLYYLGTELGKPSHKNLYSVQLSGNEPPVCLSCDVLTPEGNRCTYAYAYFSTNGSHYALYCAGPDPVFIAIVNANHRQISIWEENRSLRRKLAARTQPIVKNFNVNANGYTNKVKLYLPPDFDETKKYPLLITVYAGPNTIRITEEATYGFESYIVTNRSVIYGRIDGRGSAYKGSKMLFEIYRRLGTVEIEDQIIITRTLQEKYSWIDSNRTGIWGWSYGGFSAAMVLATDAESVFKCGISVAPVTSWIYYDSLYTERFMGLPTPEDNQSGYNDTDVSRRVEGMRGKKYMLIHGTADDNVHYQQTMMLNKALVNSDIMFQQQTYTDEAHALGNVFPHLYHTTDRFWANCLGYSH.

Residues 1–23 (MEVLVQLALLLVVHGSLVVLVAG) form the signal peptide. 2 N-linked (GlcNAc...) asparagine glycosylation sites follow: Asn68 and Asn239. 2 cysteine pairs are disulfide-bonded: Cys450-Cys453 and Cys463-Cys481. Asn473, Asn505, Asn578, and Asn631 each carry an N-linked (GlcNAc...) asparagine glycan. Residue Ser639 is the Charge relay system of the active site. Cys659 and Cys770 are disulfide-bonded. 2 N-linked (GlcNAc...) asparagine glycosylation sites follow: Asn689 and Asn694. Active-site charge relay system residues include Asp718 and His750.

It belongs to the peptidase S9B family. DPPIV subfamily. Expressed by the venom duct.

Its subcellular location is the secreted. The enzyme catalyses Release of an N-terminal dipeptide, Xaa-Yaa-|-Zaa-, from a polypeptide, preferentially when Yaa is Pro, provided Zaa is neither Pro nor hydroxyproline.. Its activity is regulated as follows. Inhibited by diprotin A. In terms of biological role, venom dipeptidyl-peptidase which removes N-terminal dipeptides sequentially from polypeptides having unsubstituted N-termini provided that the penultimate residue is proline. May process promelittin into its active form and/or modulate the chemotactic activity of immune cells after the insect sting. The polypeptide is Venom dipeptidyl peptidase 4 (Apis mellifera (Honeybee)).